The sequence spans 191 residues: Cytochrome b-245 light chain (191 aa).

Residues 2–7 (GQIEWA) are Cytoplasmic-facing. The chain crosses the membrane as a helical span at residues 8-30 (MWANEQALASGLILITGGIVATA). The Extracellular segment spans residues 31–35 (GQFTQ). The chain crosses the membrane as a helical span at residues 36-53 (WYLGAYSIAAGVLVCLLE). Topologically, residues 54 to 69 (YPRGKRSKGSTMERCG) are cytoplasmic. An intramembrane segment occupies 70–80 (QKYLTRVVKLF). Over 81-86 (GPLTRN) the chain is Cytoplasmic. A helical transmembrane segment spans residues 87 to 104 (YYIRAFLHLGLAVPAGFL). Position 105 (Leu105) is a topological domain, extracellular. The helical transmembrane segment at 106-126 (ATILGTACLAIASGIYLLAAI) threads the bilayer. At 127 to 191 (RGEQWSPIEP…NPMPVNDEVV (65 aa)) the chain is on the cytoplasmic side. Positions 134 to 191 (IEPKPKERPQIGGTIKQPPSNPPPRPPAEARKKLSEEAAGVPTGGPQENPMPVNDEVV) are disordered. Phosphothreonine is present on Thr147. Lys149 is covalently cross-linked (Glycyl lysine isopeptide (Lys-Gly) (interchain with G-Cter in ubiquitin)). Position 168 is a phosphoserine (Ser168).

This sequence belongs to the p22phox family. Component of the phagocyte NADPH oxidase core complex/cytochrome b558 complex, composed of CYBB (heavy chain (beta)) and CYBA (light chain (alpha)). Component of the phagocyte NADPH oxidase complex composed of an obligatory core heterodimer formed by the membrane proteins CYBA and CYBB and the cytosolic regulatory subunits NCF1/p47-phox, NCF2/p67-phox, NCF4/p40-phox and the small GTPase RAC1 or RAC2. Interacts with NCF1 (via SH3 domain). Interacts with SH3PXD2A. Interacts with DUOX1, DUOX2 and TPO. Interacts with NOX4; this interaction mediates superoxide generation. Interacts with calprotectin (S100A8/9). Interacts with GBP7. Interacts with NOXO1. Forms a heterodimer with NOX3 and is essential for activity and cell membrane localization of NOX3. Interacts with NOX1. Post-translationally, phosphorylation at Thr-147 enhances NADPH oxidase activity by promoting NCF1/p47-phox binding. In terms of processing, ubiquitinated at Lys-149 likely by RNF145.

It localises to the cell membrane. Functionally, subunit of NADPH oxidase complexes that is required for the NADPH oxidase activity that generates, in various cell types, superoxide from molecular oxygen utilizing NADPH as an electron donor. Subunit of the phagocyte NADPH oxidase complex that mediates the transfer of electrons from cytosolic NADPH to O2 to produce the superoxide anion (O2(-)). In the activated complex, electrons are first transferred from NADPH to flavin adenine dinucleotide (FAD) and subsequently transferred via two heme molecules to molecular oxygen, producing superoxide through an outer-sphere reaction. Activation of the NADPH oxidase complex is initiated by the assembly of cytosolic subunits of the NADPH oxidase complex with the core NADPH oxidase complex to form a complex at the plasma membrane or phagosomal membrane. This activation process is initiated by phosphorylation dependent binding of the cytosolic NCF1/p47-phox subunit to the C-terminus of CYBA/p22-phox. Aassociates with NOX3 to form a functional NADPH oxidase constitutively generating superoxide. The protein is Cytochrome b-245 light chain of Bison bison (American bison).